We begin with the raw amino-acid sequence, 424 residues long: Adenylosuccinate synthetase (424 aa).

GTP is bound by residues 12-18 (GDEGKGK) and 40-42 (GHT). The Proton acceptor role is filled by Asp-13. 2 residues coordinate Mg(2+): Asp-13 and Gly-40. IMP is bound by residues 13–16 (DEGK), 38–41 (NAGH), Thr-128, Arg-142, Gln-223, Thr-238, and Arg-302. The active-site Proton donor is the His-41. Substrate is bound at residue 298-304 (TTTGRPR). GTP contacts are provided by residues Arg-304, 330–332 (HVD), and 412–414 (GVG).

The protein belongs to the adenylosuccinate synthetase family. As to quaternary structure, homodimer. Mg(2+) serves as cofactor.

The protein resides in the cytoplasm. The catalysed reaction is IMP + L-aspartate + GTP = N(6)-(1,2-dicarboxyethyl)-AMP + GDP + phosphate + 2 H(+). The protein operates within purine metabolism; AMP biosynthesis via de novo pathway; AMP from IMP: step 1/2. Its function is as follows. Plays an important role in the de novo pathway of purine nucleotide biosynthesis. Catalyzes the first committed step in the biosynthesis of AMP from IMP. The sequence is that of Adenylosuccinate synthetase from Acetivibrio thermocellus (strain ATCC 27405 / DSM 1237 / JCM 9322 / NBRC 103400 / NCIMB 10682 / NRRL B-4536 / VPI 7372) (Clostridium thermocellum).